Reading from the N-terminus, the 1071-residue chain is MKLIYTEMSYSMTEILVNEARKAADQGYRVFYIAPNSLSFEKEREVLTLLPERGTFSIIVTRFVQMSRYFTVESSPSKQHLDDTTLAMIFYRTLMQLKPEDLPSYGRLQNNSVFIEQLVELYKELKNAQLSVHDLTGLDHPQKQEDLIKIIELAETIMIQQDYNQDSPLQSFARAIKLGLLNNQLSKTVVVIDGFSRFSAEEDYLLSLLNNNCQEVIIGSYVSQKAYQKSFIKGNIYEASLHFLQDLAQKYHIKPVFATSNQVFKPAFSRLTQLFEATHDFSQVDWQLQKNDLDHFSLWQCHHQKEEIEHVAKSIRQKLYEGYRYKDILVLLGDMDAYQLQIGPIFDKFEIPYYLGKAEPMAAHPLVQFIESLERSQRYNWRREDILNMLKSGLFGCFDDSDIDRFEEYTQFADIKGFTKFSKPFTINSSRQYPLDFLNEMRQDIVLPLQELFKSQKQLGASLVDKLILFLKKIRLAENMQGLAQSQLEVEKNEEVWKRFTDILTSFHHIFGQEKLRLSDCLALIKTGMKSAQYRVVPATLDVVTIKSYDLVQPHSKPFVYAIGLTQSHFPKQIHHSGLLSDQERARINEIRNYRHFDIASAENSKKNHQTALSLFNAATKELVLSVPTVINETFDDLSPYLKELINFGLPLLDKGKNYLSYDNSDIANYKALLSQIIAINRQDLIEMSDQDKMFWTVVLRYLRKQLRKQQLELPTSDYRLSTKPLSKEVIEVCFPKGIPLKLSATALTVFYNNQYNYFLKYVLNLNKTESIHPDSRIHGQYLHRVFERLMKDHTQEPFDNKLKQAIYHTNQESFFQQVYQDNAEAEYSLAILEDIVRSTAPILQLNQNIQVIDQEKNFQLDMGNEILVHGIIDRIDQLSDGSLGIVDYKSSANQFDIGTFYNGLSPQLVTYLAALKQIAPHDINQLFGAMYLHLQDPKLDLVTFKQIDNTLVESIYKALTYKGIFSEVEKEHLSTGAYQTKNALYSNDELETLLNYNKYLYLKAAKHIKKGHFLINPYTSDGKTVQGDQLKAITRFEADLDMGQARRLVTLPAKEKKECFLTLMRKESHL.

It belongs to the helicase family. AddB/RexB type 2 subfamily. In terms of assembly, heterodimer of AddA and RexB. The cofactor is Mg(2+).

The heterodimer acts as both an ATP-dependent DNA helicase and an ATP-dependent, dual-direction single-stranded exonuclease. Recognizes the chi site generating a DNA molecule suitable for the initiation of homologous recombination. This subunit has 5' -&gt; 3' nuclease activity but not helicase activity. In Streptococcus pyogenes serotype M4 (strain MGAS10750), this protein is ATP-dependent helicase/deoxyribonuclease subunit B.